The primary structure comprises 242 residues: Lactate utilization protein A 1 (242 aa).

Belongs to the LutA/YkgE family.

In terms of biological role, is involved in L-lactate degradation and allows cells to grow with lactate as the sole carbon source. The chain is Lactate utilization protein A 1 from Bacillus anthracis (strain CDC 684 / NRRL 3495).